Reading from the N-terminus, the 100-residue chain is NADH-quinone oxidoreductase subunit K (100 aa).

Transmembrane regions (helical) follow at residues 4 to 24 (LQHG…GLVI), 28 to 48 (LLFM…AFVV), and 60 to 80 (VMYI…LALL).

The protein belongs to the complex I subunit 4L family. NDH-1 is composed of 13 different subunits. Subunits NuoA, H, J, K, L, M, N constitute the membrane sector of the complex.

The protein resides in the cell inner membrane. It carries out the reaction a quinone + NADH + 5 H(+)(in) = a quinol + NAD(+) + 4 H(+)(out). In terms of biological role, NDH-1 shuttles electrons from NADH, via FMN and iron-sulfur (Fe-S) centers, to quinones in the respiratory chain. The immediate electron acceptor for the enzyme in this species is believed to be ubiquinone. Couples the redox reaction to proton translocation (for every two electrons transferred, four hydrogen ions are translocated across the cytoplasmic membrane), and thus conserves the redox energy in a proton gradient. The polypeptide is NADH-quinone oxidoreductase subunit K (Citrobacter koseri (strain ATCC BAA-895 / CDC 4225-83 / SGSC4696)).